A 991-amino-acid polypeptide reads, in one-letter code: Collagenase ColT (991 aa).

The first 28 residues, 1-28 (MKKKFIKMLCSIAIGCMISTSYSIKVSA), serve as a signal peptide directing secretion. A propeptide spanning residues 29-52 (FSNGNTKTNPNGEFKSLSLNSTNP) is cleaved from the precursor. Positions 53–727 (YKTKYSFNDL…VYDIVFHGLL (675 aa)) are S1 metalloprotease domain, degrades FALGPA (furylacryloyl-Leu-Gly-Pro-Ala). The segment at 57–330 (YSFNDLNKLS…AIEAIKEDFN (274 aa)) is activator domain. A catalytic subdomain region spans residues 340–611 (DINKLIEEGK…MENLVNNYDN (272 aa)). Residue glutamate 440 coordinates Ca(2+). Histidine 465 serves as a coordination point for Zn(2+). Residue glutamate 466 is part of the active site. Zn(2+) is bound at residue histidine 469. Positions 473, 477, and 479 each coordinate Ca(2+). Position 499 (glutamate 499) interacts with Zn(2+). The helper subdomain stretch occupies residues 619–731 (DDYMKQYDNK…VFHGLLSHNK (113 aa)). 2 collagen-binding domain regions span residues 755–870 (IYEK…NISD) and 878–991 (IKKI…VIIN). The Ca(2+) site is built by glutamate 757, glutamate 759, asparagine 761, aspartate 784, aspartate 787, glutamate 883, glutamate 885, asparagine 887, aspartate 888, aspartate 910, and aspartate 913.

It belongs to the peptidase M9B family. Collagenase subfamily. Ca(2+) serves as cofactor. It depends on Zn(2+) as a cofactor.

The protein resides in the secreted. The enzyme catalyses Digestion of native collagen in the triple helical region at Xaa-|-Gly bonds. With synthetic peptides, a preference is shown for Gly at P3 and P1', Pro and Ala at P2 and P2', and hydroxyproline, Ala or Arg at P3'.. Its activity is regulated as follows. Partially inhibited by 1-10-phenanthroline; inactivation is irreversible. Partially inhibited by EDTA; inactivation is reversible. Inhibited by broad-spectrum zinc metalloprotease inhibitor batimastat. N-aryl mercaptoacetamide-based inhibitors have been isolated that act on clostridial collagenases with submicromolar affinity while having negligibile activity on human collagenases. In terms of biological role, clostridial collagenases are among the most efficient degraders of eukaryotic collagen known; saprophytes use collagen as a carbon source while pathogens additionally digest collagen to aid in host colonization. Has both tripeptidylcarboxypeptidase on Gly-X-Y and endopeptidase activities; the endopeptidase cuts within the triple helix region of collagen while tripeptidylcarboxypeptidase successively digests the exposed ends, thus clostridial collagenases can digest large sections of collagen. The activator domain (residues 57-330) and catalytic subdomain (340-611) open and close around substrate allowing digestion when the protein is closed. The sequence is that of Collagenase ColT from Clostridium tetani (strain Massachusetts / E88).